Reading from the N-terminus, the 95-residue chain is Protein RnfH (95 aa).

The protein belongs to the UPF0125 (RnfH) family.

The polypeptide is Protein RnfH (Methylococcus capsulatus (strain ATCC 33009 / NCIMB 11132 / Bath)).